The primary structure comprises 389 residues: Glutamate 5-kinase (389 aa).

K16 is a binding site for ATP. Residues S56, D143, and N155 each coordinate substrate. An ATP-binding site is contributed by 175-176 (SD). Positions 281–358 (AGELHVDEGA…AEIEAILGYA (78 aa)) constitute a PUA domain.

It belongs to the glutamate 5-kinase family.

The protein resides in the cytoplasm. It carries out the reaction L-glutamate + ATP = L-glutamyl 5-phosphate + ADP. The protein operates within amino-acid biosynthesis; L-proline biosynthesis; L-glutamate 5-semialdehyde from L-glutamate: step 1/2. Functionally, catalyzes the transfer of a phosphate group to glutamate to form L-glutamate 5-phosphate. The sequence is that of Glutamate 5-kinase from Rhizobium rhizogenes (strain K84 / ATCC BAA-868) (Agrobacterium radiobacter).